Reading from the N-terminus, the 201-residue chain is Small ribosomal subunit protein uS4c (201 aa).

Residues 89–149 (MRLDNILFRL…DKPKSGALIK (61 aa)) enclose the S4 RNA-binding domain.

Belongs to the universal ribosomal protein uS4 family. Part of the 30S ribosomal subunit. Contacts protein S5. The interaction surface between S4 and S5 is involved in control of translational fidelity.

The protein resides in the plastid. One of the primary rRNA binding proteins, it binds directly to 16S rRNA where it nucleates assembly of the body of the 30S subunit. Its function is as follows. With S5 and S12 plays an important role in translational accuracy. This is Small ribosomal subunit protein uS4c (rps4) from Cuscuta reflexa (Southern Asian dodder).